The sequence spans 34 residues: Protamine-Y1/Y2 (34 aa).

A disordered region spans residues 1–34 (PRRRRQASRPVRRRRRYRRSTAARRRRRVVRRRR).

In terms of tissue distribution, testis.

It localises to the nucleus. The protein localises to the chromosome. Protamines substitute for histones in the chromatin of sperm during the haploid phase of spermatogenesis. They compact sperm DNA into a highly condensed, stable and inactive complex. The polypeptide is Protamine-Y1/Y2 (Thunnus thynnus (Atlantic bluefin tuna)).